The following is an 84-amino-acid chain: MPNIKSAIKRVKTAETRNSRNASQRSAMRTAIKKFDEAAANNADNAKDLYVEASKKLDSAVSKGLIHKNNAARNKSRLAAKLAK.

The segment at 1 to 28 (MPNIKSAIKRVKTAETRNSRNASQRSAM) is disordered.

This sequence belongs to the bacterial ribosomal protein bS20 family.

Binds directly to 16S ribosomal RNA. The chain is Small ribosomal subunit protein bS20 from Listeria monocytogenes serotype 4b (strain CLIP80459).